Here is a 690-residue protein sequence, read N- to C-terminus: DNA ligase (690 aa).

Residues 49–53 (DAEYD), 98–99 (SL), and E129 each bind NAD(+). K131 (N6-AMP-lysine intermediate) is an active-site residue. Residues R152, E191, K308, and K332 each contribute to the NAD(+) site. Zn(2+) contacts are provided by C426, C429, C444, and C450. In terms of domain architecture, BRCT spans 607 to 690 (EDAARLEGLT…ALLREQGIDA (84 aa)).

The protein belongs to the NAD-dependent DNA ligase family. LigA subfamily. It depends on Mg(2+) as a cofactor. The cofactor is Mn(2+).

It catalyses the reaction NAD(+) + (deoxyribonucleotide)n-3'-hydroxyl + 5'-phospho-(deoxyribonucleotide)m = (deoxyribonucleotide)n+m + AMP + beta-nicotinamide D-nucleotide.. DNA ligase that catalyzes the formation of phosphodiester linkages between 5'-phosphoryl and 3'-hydroxyl groups in double-stranded DNA using NAD as a coenzyme and as the energy source for the reaction. It is essential for DNA replication and repair of damaged DNA. The polypeptide is DNA ligase (Salinibacter ruber (strain DSM 13855 / M31)).